A 197-amino-acid chain; its full sequence is Phosphoheptose isomerase (197 aa).

Residues 36-197 (MVNALLNEGK…IDSQLFGSEE (162 aa)) enclose the SIS domain. Substrate is bound at residue 51–53 (NGG). Positions 60 and 64 each coordinate Zn(2+). Substrate-binding positions include Glu-64, 93–94 (ND), 119–121 (STS), Ser-124, and Gln-174. Residues Gln-174 and His-182 each coordinate Zn(2+).

It belongs to the SIS family. GmhA subfamily. As to quaternary structure, homotetramer. Zn(2+) serves as cofactor.

It localises to the cytoplasm. It catalyses the reaction 2 D-sedoheptulose 7-phosphate = D-glycero-alpha-D-manno-heptose 7-phosphate + D-glycero-beta-D-manno-heptose 7-phosphate. It functions in the pathway carbohydrate biosynthesis; D-glycero-D-manno-heptose 7-phosphate biosynthesis; D-glycero-alpha-D-manno-heptose 7-phosphate and D-glycero-beta-D-manno-heptose 7-phosphate from sedoheptulose 7-phosphate: step 1/1. Catalyzes the isomerization of sedoheptulose 7-phosphate in D-glycero-D-manno-heptose 7-phosphate. This chain is Phosphoheptose isomerase, found in Pseudomonas putida (strain GB-1).